The primary structure comprises 149 residues: 17 kDa major membrane protein (149 aa).

The first 19 residues, 1 to 19 (MKKIIKLSLLSLSIAGLAS), serve as a signal peptide directing secretion. The N-palmitoyl cysteine moiety is linked to residue cysteine 20. Cysteine 20 carries S-diacylglycerol cysteine lipidation.

The protein resides in the cell outer membrane. This Francisella tularensis subsp. holarctica (strain LVS) protein is 17 kDa major membrane protein.